The sequence spans 803 residues: Volume-regulated anion channel subunit LRRC8C (803 aa).

Topologically, residues 1–22 (MIPVTEFRQFSEQQPAFRVLKP) are cytoplasmic. A helical membrane pass occupies residues 23-48 (WWDVFTDYLSVAMLMIGVFGCTLQVM). Residues 49 to 124 (QDKIICLPKR…CYERALHWYA (76 aa)) are Extracellular-facing. Intrachain disulfides connect Cys54–Cys308 and Cys115–Cys293. A helical membrane pass occupies residues 125 to 144 (KYFPYLVLIHTLVFMLCSNF). Residues 145 to 262 (WFKFPGSSSK…EEGDILYAMY (118 aa)) lie on the Cytoplasmic side of the membrane. The tract at residues 177-206 (EVSGEDSEEKDNRKNNMNRSGTIQSGPEGN) is disordered. Over residues 191–206 (NNMNRSGTIQSGPEGN) the composition is skewed to polar residues. Phosphoserine is present on residues Ser212 and Ser215. A helical transmembrane segment spans residues 263 to 284 (VRQTVLKVIKFLIIIAYNSALV). Over 285–314 (SKVQFTVDCNVDIQDMTGYKNFSCNHTMAH) the chain is Extracellular. A helical transmembrane segment spans residues 315 to 339 (LFSKLSFCYLCFVSIYGLTCLYTLY). The Cytoplasmic portion of the chain corresponds to 340 to 803 (WLFYRSLREY…SDVREQMKAD (464 aa)). LRR repeat units lie at residues 409–420 (WTPDKLRQKLQT), 421–443 (NAHNRLELPLIMLSGLPDTVFEI), 446–466 (LQSLKLEIIKNVMIPATIAQL), 467–488 (DNLQELCLHQCSVKIHSAALSF), 490–513 (KENLKVLSVKFDDMRELPPWMYGL), 515–537 (NLEELYLVGSLSHDISKNVTLES), 541–563 (LKSLKILSIKSNVSKIPQAVVDV), 566–586 (HLQKMCVHNDGTKLVMLNNLK), 588–611 (MTNLTELELVHCDLERIPHAVFSL), 613–635 (SLQELDLKENNLKSIEEIVSFQH), 637–659 (RKLTVLKLWYNSIAYIPEHIKKL), 660–682 (TSLERLFFSHNKVEVLPSHLFLC), 684–705 (KIRYLDLSYNDIRFIPPEIGVL), 706–728 (QSLQYFSITCNKVESLPDELYFC), 730–751 (KLKTLKIGKNSLSVLSPKIGNL), 752–774 (LFLSYLDIKGNHFEVLPPELGDC), and 776–799 (ALKRAGLVVEDALFETLPSDVREQ).

It belongs to the LRRC8 family. Heterohexamer; oligomerizes with other LRRC8 proteins (LRRC8A, LRRC8B, LRRC8D and/or LRRC8E) to form a heterohexamer. Homoheptamer; inactive, likely because it is not targeted to the plasma membrane in the absence of LRRC8A. In vivo, the subunit composition may depend primarily on expression levels, and heterooligomeric channels containing various proportions of the different LRRC8 proteins may coexist. In terms of tissue distribution, expressed at very low levels in adipose tissue.

The protein resides in the cell membrane. The protein localises to the endoplasmic reticulum membrane. It catalyses the reaction chloride(in) = chloride(out). It carries out the reaction iodide(out) = iodide(in). The enzyme catalyses taurine(out) = taurine(in). The catalysed reaction is 2',3'-cGAMP(out) = 2',3'-cGAMP(in). Non-essential component of the volume-regulated anion channel (VRAC, also named VSOAC channel), an anion channel required to maintain a constant cell volume in response to extracellular or intracellular osmotic changes. The VRAC channel conducts iodide better than chloride and can also conduct organic osmolytes like taurine. Plays a redundant role in the efflux of amino acids, such as aspartate and glutamate, in response to osmotic stress. The VRAC channel also mediates transport of immunoreactive cyclic dinucleotide GMP-AMP (2'-3'-cGAMP), an immune messenger produced in response to DNA virus in the cytosol. Channel activity requires LRRC8A plus at least one other family member (LRRC8B, LRRC8C, LRRC8D or LRRC8E); channel characteristics depend on the precise subunit composition. May play a role in adipogenesis. The chain is Volume-regulated anion channel subunit LRRC8C from Mus musculus (Mouse).